Reading from the N-terminus, the 2353-residue chain is Nonribosomal peptide synthetase 7 (2353 aa).

The segment at 305–684 (TFSALNTRAN…AIEEVEDSAV (380 aa)) is adenylation 1. One can recognise a Carrier 1 domain in the interval 776–853 (RDLTDSEKVV…QVAAAVQPQP (78 aa)). Position 813 is an O-(pantetheine 4'-phosphoryl)serine (Ser813). Residues 885-1147 (EDAFPVTPFQ…LMVAPLRVKV (263 aa)) are condensation 1. Residues 1338–1725 (TYAGLAIKMN…QTNVFRQCAV (388 aa)) form an adenylation 2 region. Residues 1826–1902 (EICSEAEREL…EQAALMVQGQ (77 aa)) form the Carrier 2 domain. Ser1863 carries the O-(pantetheine 4'-phosphoryl)serine modification. The interval 1939-2214 (EDIYPCSPGQ…NGNCANFLPY (276 aa)) is condensation 2.

The protein belongs to the NRP synthetase family.

Its function is as follows. Nonribosomal peptide synthesis (NRPS) is a key mechanism responsible for the biosynthesis of bioactive metabolites which are potentially contributing to organismal virulence. The sequence is that of Nonribosomal peptide synthetase 7 (NRPS7) from Aspergillus fumigatus (strain ATCC MYA-4609 / CBS 101355 / FGSC A1100 / Af293) (Neosartorya fumigata).